The following is a 1028-amino-acid chain: Golgin subfamily A member 2 (1028 aa).

The interval 1 to 112 is disordered; the sequence is MADQNRQIKL…NRPLSSTESL (112 aa). The segment covering 40 to 60 has biased composition (basic and acidic residues); sequence KGDQTDAPADRRSPENERVDV. Residues 74–87 are compositionally biased toward polar residues; it reads NPASAINTDNSAPQ. Coiled-coil stretches lie at residues 162–200, 233–388, 414–690, 738–769, and 799–840; these read NTQL…EQGA, ARQK…YAVQ, RDST…LLNG, LSRV…LTAL, and HEAL…LSGE. Residues 259-280 are disordered; sequence RTLSSVSTQQKQHERHNKELEK. A disordered region spans residues 756–791; the sequence is RRIHQDTRQQLTALSHDHHHHHHHEPHSTCAETDGS. Residues 944-981 form a disordered region; the sequence is AMDVSSSPQSSTAEIQSQSSERPAADPISSPSLRPQED. The span at 945-964 shows a compositional bias: polar residues; it reads MDVSSSPQSSTAEIQSQSSE.

The protein belongs to the GOLGA2 family.

It localises to the golgi apparatus. The protein resides in the cis-Golgi network membrane. It is found in the endoplasmic reticulum-Golgi intermediate compartment membrane. The protein localises to the cytoplasm. Its subcellular location is the cytoskeleton. It localises to the spindle pole. Peripheral membrane component of the cis-Golgi stack that acts as a membrane skeleton that maintains the structure of the Golgi apparatus, and as a vesicle thether that facilitates vesicle fusion to the Golgi membrane. Required for normal protein transport from the endoplasmic reticulum to the Golgi apparatus and the cell membrane. Plays a central role in mitotic Golgi disassembly. Also plays a key role in spindle pole assembly and centrosome organization. It probably promotes mitotic spindle pole assembly by activating assembly factors to nucleate microtubules around the Golgi and capture them to couple mitotic membranes to the spindle. Also required for the Golgi ribbon formation and glycosylation of membrane and secretory proteins. The sequence is that of Golgin subfamily A member 2 from Danio rerio (Zebrafish).